The primary structure comprises 173 residues: Photosystem I assembly protein Ycf3 (173 aa).

TPR repeat units lie at residues 35–68, 72–105, and 120–153; these read AFAYYRDGMSAQADGEYAEALENYQEALTLEEDP, SFILYNIALVHTSNGDHQTALDHYLQALDLNPKM, and GQRSEEAGNDDEAERHYDQAAEYWTQAIRLAPNN.

Belongs to the Ycf3 family.

It is found in the cellular thylakoid membrane. In terms of biological role, essential for the assembly of the photosystem I (PSI) complex. May act as a chaperone-like factor to guide the assembly of the PSI subunits. In Synechococcus elongatus (strain ATCC 33912 / PCC 7942 / FACHB-805) (Anacystis nidulans R2), this protein is Photosystem I assembly protein Ycf3.